The sequence spans 300 residues: Acetylglutamate kinase (300 aa).

Residues 73–74, arginine 95, and asparagine 197 each bind substrate; that span reads GG.

It belongs to the acetylglutamate kinase family. ArgB subfamily.

The protein resides in the cytoplasm. The catalysed reaction is N-acetyl-L-glutamate + ATP = N-acetyl-L-glutamyl 5-phosphate + ADP. It functions in the pathway amino-acid biosynthesis; L-arginine biosynthesis; N(2)-acetyl-L-ornithine from L-glutamate: step 2/4. Catalyzes the ATP-dependent phosphorylation of N-acetyl-L-glutamate. The sequence is that of Acetylglutamate kinase from Bordetella avium (strain 197N).